Reading from the N-terminus, the 164-residue chain is MSNFAGDETAPFFGFLGAAAALVFSCMGAAYGTAKSGVGVASMGVMRPELVMKSIVPVVMAGVLGIYGLIIAVIISTGINPKTKSYYLFDGYAHLSSGLACGLAGLSAGMAIGIVGDAGVRANAQQPKLFVGMILILIFAEALALYGLIVGIILSSRAGQSRAE.

At 1 to 9 (MSNFAGDET) the chain is on the lumenal side. The chain crosses the membrane as a helical span at residues 10 to 32 (APFFGFLGAAAALVFSCMGAAYG). Residues 33 to 54 (TAKSGVGVASMGVMRPELVMKS) lie on the Cytoplasmic side of the membrane. The helical transmembrane segment at 55–75 (IVPVVMAGVLGIYGLIIAVII) threads the bilayer. Residues 76–94 (STGINPKTKSYYLFDGYAH) are Lumenal-facing. Residues 95-116 (LSSGLACGLAGLSAGMAIGIVG) traverse the membrane as a helical segment. Residues 117-128 (DAGVRANAQQPK) lie on the Cytoplasmic side of the membrane. The helical transmembrane segment at 129–154 (LFVGMILILIFAEALALYGLIVGIIL) threads the bilayer. The Lumenal segment spans residues 155 to 164 (SSRAGQSRAE).

It belongs to the V-ATPase proteolipid subunit family. As to quaternary structure, V-ATPase is a heteromultimeric enzyme composed of a peripheral catalytic V1 complex (main components: subunits A, B, C, D, E, and F) attached to an integral membrane V0 proton pore complex (main component: the proteolipid protein; which is present as a hexamer that forms the proton-conducting pore).

Its subcellular location is the vacuole membrane. Proton-conducting pore forming subunit of the membrane integral V0 complex of vacuolar ATPase. V-ATPase is responsible for acidifying a variety of intracellular compartments in eukaryotic cells. In Solanum lycopersicum (Tomato), this protein is V-type proton ATPase 16 kDa proteolipid subunit.